Reading from the N-terminus, the 508-residue chain is Bifunctional purine biosynthesis protein PurH (508 aa).

Residues 1-145 form the MGS-like domain; the sequence is MAKKALISVS…KNYKYVTILV (145 aa).

Belongs to the PurH family.

It catalyses the reaction (6R)-10-formyltetrahydrofolate + 5-amino-1-(5-phospho-beta-D-ribosyl)imidazole-4-carboxamide = 5-formamido-1-(5-phospho-D-ribosyl)imidazole-4-carboxamide + (6S)-5,6,7,8-tetrahydrofolate. The enzyme catalyses IMP + H2O = 5-formamido-1-(5-phospho-D-ribosyl)imidazole-4-carboxamide. Its pathway is purine metabolism; IMP biosynthesis via de novo pathway; 5-formamido-1-(5-phospho-D-ribosyl)imidazole-4-carboxamide from 5-amino-1-(5-phospho-D-ribosyl)imidazole-4-carboxamide (10-formyl THF route): step 1/1. It participates in purine metabolism; IMP biosynthesis via de novo pathway; IMP from 5-formamido-1-(5-phospho-D-ribosyl)imidazole-4-carboxamide: step 1/1. This is Bifunctional purine biosynthesis protein PurH from Thermoanaerobacter sp. (strain X514).